The chain runs to 552 residues: Probable malate:quinone oxidoreductase (552 aa).

The segment at 530–552 (DAKPATPEAKPAQASSPQHDMAL) is disordered. A compositionally biased stretch (polar residues) spans 542 to 552 (QASSPQHDMAL).

Belongs to the MQO family. FAD serves as cofactor.

The enzyme catalyses (S)-malate + a quinone = a quinol + oxaloacetate. It functions in the pathway carbohydrate metabolism; tricarboxylic acid cycle; oxaloacetate from (S)-malate (quinone route): step 1/1. The sequence is that of Probable malate:quinone oxidoreductase from Cronobacter sakazakii (strain ATCC BAA-894) (Enterobacter sakazakii).